A 380-amino-acid chain; its full sequence is Queuine tRNA-ribosyltransferase (380 aa).

The active-site Proton acceptor is the D93. Residues 93–97 (DSGGF), D147, Q198, and G225 each bind substrate. An RNA binding region spans residues 256 to 262 (GVGLPSN). D275 acts as the Nucleophile in catalysis. The interval 280–284 (ARNGR) is RNA binding; important for wobble base 34 recognition. Zn(2+)-binding residues include C313, C315, C318, and H344.

This sequence belongs to the queuine tRNA-ribosyltransferase family. Homodimer. Within each dimer, one monomer is responsible for RNA recognition and catalysis, while the other monomer binds to the replacement base PreQ1. Zn(2+) is required as a cofactor.

The enzyme catalyses 7-aminomethyl-7-carbaguanine + guanosine(34) in tRNA = 7-aminomethyl-7-carbaguanosine(34) in tRNA + guanine. It functions in the pathway tRNA modification; tRNA-queuosine biosynthesis. In terms of biological role, catalyzes the base-exchange of a guanine (G) residue with the queuine precursor 7-aminomethyl-7-deazaguanine (PreQ1) at position 34 (anticodon wobble position) in tRNAs with GU(N) anticodons (tRNA-Asp, -Asn, -His and -Tyr). Catalysis occurs through a double-displacement mechanism. The nucleophile active site attacks the C1' of nucleotide 34 to detach the guanine base from the RNA, forming a covalent enzyme-RNA intermediate. The proton acceptor active site deprotonates the incoming PreQ1, allowing a nucleophilic attack on the C1' of the ribose to form the product. After dissociation, two additional enzymatic reactions on the tRNA convert PreQ1 to queuine (Q), resulting in the hypermodified nucleoside queuosine (7-(((4,5-cis-dihydroxy-2-cyclopenten-1-yl)amino)methyl)-7-deazaguanosine). This Clostridium perfringens (strain 13 / Type A) protein is Queuine tRNA-ribosyltransferase.